Reading from the N-terminus, the 388-residue chain is P2X receptor E (388 aa).

Residues 1 to 28 (MNFRNIDWDSLFSYSTIKIVRIRDKRLG) are Cytoplasmic-facing. Residues 29–49 (ILHFAFLIGIILYIIVGTIFL) traverse the membrane as a helical segment. Residues 50–312 (QKKYLVLESP…QLGQFDFQTM (263 aa)) are Lumenal-facing. Residues 291 to 304 (RHGVRIIFIQTGQL) form a pore-forming motif region. Residues 313–333 (LLTFVSGIGLVTAASLIVDII) form a helical membrane-spanning segment. Over 334–388 (ATRIMPQRSRYQELKFQDSSINNTQKTPTNDHTPLLKDNEDTINENSYQNNSYEK) the chain is Cytoplasmic. The interval 349–388 (FQDSSINNTQKTPTNDHTPLLKDNEDTINENSYQNNSYEK) is disordered. 2 stretches are compositionally biased toward polar residues: residues 350–365 (QDSS…TNDH) and 377–388 (NENSYQNNSYEK).

Belongs to the P2X receptor family.

Its subcellular location is the contractile vacuole membrane. In terms of biological role, P2X receptors are ATP-gated ion channels that play a role in intracellular calcium signaling. Not required for the purinergic response to extracellular nucleotides. Not essential for osmoregulation. Inward currents evoked by intracellular ATP. ATP analog beta, gamma-imido-ATP is a weak partial agonist of p2xE. Exclusively selective for ATP over other nucleotides. Insensitive to copper and P2 receptor antagonists PPADS and suramin but strongly inhibited by sodium ions. More permeable to ammonium than either sodium or potassium ions and less permeable to choline. Permeable to calcium ions, but not chloride. The protein is P2X receptor E (p2xE) of Dictyostelium discoideum (Social amoeba).